Reading from the N-terminus, the 215-residue chain is Small ribosomal subunit protein uS5 (215 aa).

A compositionally biased stretch (polar residues) spans 1-11 (MTDSSPQSNPN). The interval 1–61 (MTDSSPQSNP…GQDRDSEWQE (61 aa)) is disordered. Low complexity predominate over residues 12-28 (AVPGAADVPAAAQGQQQ). Basic and acidic residues predominate over residues 39–61 (RGDRRGDRRGGRRGQDRDSEWQE). Positions 59 to 122 (WQERVVQIRR…ADGKKHLVKV (64 aa)) constitute an S5 DRBM domain.

Belongs to the universal ribosomal protein uS5 family. Part of the 30S ribosomal subunit. Contacts proteins S4 and S8.

With S4 and S12 plays an important role in translational accuracy. In terms of biological role, located at the back of the 30S subunit body where it stabilizes the conformation of the head with respect to the body. This Synechococcus sp. (strain CC9902) protein is Small ribosomal subunit protein uS5.